Reading from the N-terminus, the 293-residue chain is Triacylglycerol lipase (293 aa).

In terms of domain architecture, AB hydrolase-1 spans 10–206 (PILLVHGLFG…YYSWSGIIKG (197 aa)). Residue Leu-17 participates in substrate binding. Catalysis depends on Ser-83, which acts as the Nucleophile. Gln-84 is a substrate binding site. Asp-217 lines the Ca(2+) pocket. Catalysis depends on charge relay system residues Asp-238 and His-260. Ca(2+) is bound by residues Asp-262, His-266, and Arg-269.

The protein belongs to the AB hydrolase superfamily. Pseudomonas lipase family. Requires Ca(2+) as cofactor.

The protein resides in the secreted. It catalyses the reaction a triacylglycerol + H2O = a diacylglycerol + a fatty acid + H(+). Its function is as follows. Catalyzes the hydrolysis of triacylglycerols, with the highest activity with tributyrin (C4), lower activity with tricaprylin (C8), and much lower activity with triacetin (C2), trilaurin (C12) and triolein (C18). This Pseudomonas fragi protein is Triacylglycerol lipase (lips).